A 363-amino-acid polypeptide reads, in one-letter code: Cobalt-precorrin-5B C(1)-methyltransferase (363 aa).

This sequence belongs to the CbiD family.

The catalysed reaction is Co-precorrin-5B + S-adenosyl-L-methionine = Co-precorrin-6A + S-adenosyl-L-homocysteine. The protein operates within cofactor biosynthesis; adenosylcobalamin biosynthesis; cob(II)yrinate a,c-diamide from sirohydrochlorin (anaerobic route): step 6/10. In terms of biological role, catalyzes the methylation of C-1 in cobalt-precorrin-5B to form cobalt-precorrin-6A. The protein is Cobalt-precorrin-5B C(1)-methyltransferase of Treponema denticola (strain ATCC 35405 / DSM 14222 / CIP 103919 / JCM 8153 / KCTC 15104).